Consider the following 180-residue polypeptide: Large ribosomal subunit protein uL5 (180 aa).

Belongs to the universal ribosomal protein uL5 family. As to quaternary structure, part of the 50S ribosomal subunit; part of the 5S rRNA/L5/L18/L25 subcomplex. Contacts the 5S rRNA and the P site tRNA. Forms a bridge to the 30S subunit in the 70S ribosome.

Its function is as follows. This is one of the proteins that bind and probably mediate the attachment of the 5S RNA into the large ribosomal subunit, where it forms part of the central protuberance. In the 70S ribosome it contacts protein S13 of the 30S subunit (bridge B1b), connecting the 2 subunits; this bridge is implicated in subunit movement. Contacts the P site tRNA; the 5S rRNA and some of its associated proteins might help stabilize positioning of ribosome-bound tRNAs. This is Large ribosomal subunit protein uL5 from Polynucleobacter necessarius subsp. necessarius (strain STIR1).